The following is a 402-amino-acid chain: LIM/homeobox protein Lhx5 (402 aa).

2 LIM zinc-binding domains span residues 3–61 (VHCA…RRFG) and 62–125 (TKCA…SSSL). Positions 124–135 (SLKEGSLNSVSS) are enriched in low complexity. Disordered regions lie at residues 124–186 (SLKE…PRTT) and 298–402 (HGPP…AAVW). A compositionally biased stretch (basic and acidic residues) spans 151–167 (DDPKETDNSTSSDKETA). A DNA-binding region (homeobox) is located at residues 180–239 (RRGPRTTIKAKQLETLKAAFAATPKPTRHIREQLAQETGLNMRVIQVWFQNRRSKERRMK). 2 stretches are compositionally biased toward low complexity: residues 300–311 (PPSQAQSPADSS) and 322–336 (PLGA…PHAA).

In terms of tissue distribution, expressed in fetal brain and in various regions of the adult central nervous system including the spinal cord, the thalamus, and the cerebellum.

The protein resides in the nucleus. Its function is as follows. Plays an essential role in the regulation of neuronal differentiation and migration during development of the central nervous system. The sequence is that of LIM/homeobox protein Lhx5 (LHX5) from Homo sapiens (Human).